We begin with the raw amino-acid sequence, 775 residues long: Chitin synthase 6 (775 aa).

The next 6 membrane-spanning stretches (helical) occupy residues 19-39, 54-74, 94-114, 441-461, 470-490, and 498-518; these read VLLMACLEWFLWLAAFLYCLV, CIIVGTAFVLLRVIFLPIMVV, LQWFAFWAFAILLTVPWLFCI, FMQNTIRTTALLFFVMVLAIM, LPVGFIAISLGLNWMLMLYFG, and IWLYPLMFILNPFYNWYYMVY. Residues 532 to 541 show a composition bias toward low complexity; sequence RADAAAADSH. 2 disordered regions span residues 532–603 and 702–775; these read RADA…DGKF and PSAF…KTSR. A compositionally biased stretch (basic and acidic residues) spans 542-556; the sequence is TTAREAAEQAEKQGD. Residues 577-586 show a composition bias toward polar residues; it reads NRESTTTSEL. The span at 702–713 shows a compositional bias: low complexity; sequence PSAFPHAHSASA. N-linked (GlcNAc...) asparagine glycosylation is present at Asn724. Residues 732–741 are compositionally biased toward basic and acidic residues; it reads RSEDIQRFSE. A compositionally biased stretch (polar residues) spans 754-763; it reads SRNVGNSSFA. Asn759 carries an N-linked (GlcNAc...) asparagine glycan. Residues 766-775 are compositionally biased toward basic residues; that stretch reads MAKRTPKTSR.

It belongs to the chitin synthase family. Class VII subfamily.

It localises to the cell membrane. The catalysed reaction is [(1-&gt;4)-N-acetyl-beta-D-glucosaminyl](n) + UDP-N-acetyl-alpha-D-glucosamine = [(1-&gt;4)-N-acetyl-beta-D-glucosaminyl](n+1) + UDP + H(+). Its function is as follows. Polymerizes chitin, a structural polymer of the cell wall and septum, by transferring the sugar moiety of UDP-GlcNAc to the non-reducing end of the growing chitin polymer. Shows additive effects in septum formation with CHS1, CHS2, CHS3A, CHS4, CHS5 and CHS7. Involved in virulence and mediates mycotoxin deoxinivalenol (DON) biosynthesis via the regulation of the expression of TRI4, TRI5 and TRI6. In Gibberella zeae (strain ATCC MYA-4620 / CBS 123657 / FGSC 9075 / NRRL 31084 / PH-1) (Wheat head blight fungus), this protein is Chitin synthase 6.